Here is a 142-residue protein sequence, read N- to C-terminus: Hemoglobin subunit alpha-A (142 aa).

The 141-residue stretch at 2-142 folds into the Globin domain; the sequence is VLSAADKTNV…VGTVLTAKYR (141 aa). H59 contacts O2. Residue H88 participates in heme b binding.

Belongs to the globin family. Heterotetramer of two alpha chains and two beta chains. Red blood cells.

Functionally, involved in oxygen transport from the lung to the various peripheral tissues. The protein is Hemoglobin subunit alpha-A (HBAA) of Coturnix japonica (Japanese quail).